The following is a 483-amino-acid chain: Probable cytochrome P450 517A1 (483 aa).

A helical transmembrane segment spans residues 1–21 (MEIINVFLFLIILFLVKDFVK). A heme-binding site is contributed by cysteine 429.

This sequence belongs to the cytochrome P450 family. The cofactor is heme.

The protein resides in the membrane. The chain is Probable cytochrome P450 517A1 (cyp517A1) from Dictyostelium discoideum (Social amoeba).